Here is a 427-residue protein sequence, read N- to C-terminus: 3-phosphoshikimate 1-carboxyvinyltransferase (427 aa).

3-phosphoshikimate is bound by residues K20, S21, and R25. K20 contributes to the phosphoenolpyruvate binding site. Phosphoenolpyruvate-binding residues include G92 and R120. 3-phosphoshikimate is bound by residues S166, Q168, D312, and K339. Q168 serves as a coordination point for phosphoenolpyruvate. D312 (proton acceptor) is an active-site residue. Phosphoenolpyruvate is bound by residues R343 and R385.

This sequence belongs to the EPSP synthase family. Monomer.

It is found in the cytoplasm. It carries out the reaction 3-phosphoshikimate + phosphoenolpyruvate = 5-O-(1-carboxyvinyl)-3-phosphoshikimate + phosphate. It participates in metabolic intermediate biosynthesis; chorismate biosynthesis; chorismate from D-erythrose 4-phosphate and phosphoenolpyruvate: step 6/7. Its function is as follows. Catalyzes the transfer of the enolpyruvyl moiety of phosphoenolpyruvate (PEP) to the 5-hydroxyl of shikimate-3-phosphate (S3P) to produce enolpyruvyl shikimate-3-phosphate and inorganic phosphate. The chain is 3-phosphoshikimate 1-carboxyvinyltransferase from Streptococcus thermophilus (strain ATCC BAA-250 / LMG 18311).